We begin with the raw amino-acid sequence, 522 residues long: Nuclear pore glycoprotein p62 (522 aa).

Ser-2 carries the post-translational modification N-acetylserine. A run of 5 repeats spans residues 6–7 (FG), 44–45 (FG), 76–77 (FG), 114–115 (FG), and 142–143 (FG). A 5 X 2 AA repeats of F-G region spans residues 6-143 (FGGTGAPTGG…GTAPTGFVFG (138 aa)). Positions 169-179 (SGFNIGSAGNS) are enriched in polar residues. Disordered stretches follow at residues 169–215 (SGFN…ATIT) and 260–288 (APGA…SSTT). 2 stretches are compositionally biased toward low complexity: residues 180–215 (AQPT…ATIT) and 262–288 (GAAS…SSTT). Positions 328–458 (MTYAQLESLI…QDLKDIIEHL (131 aa)) are required for centrosome localization. Residues 328-458 (MTYAQLESLI…QDLKDIIEHL (131 aa)) are a coiled coil. Residue Thr-373 is glycosylated (O-linked (GlcNAc) threonine). Phosphoserine occurs at positions 408 and 418. Ser-468 is a glycosylation site (O-linked (GlcNAc) serine).

The protein belongs to the nucleoporin NSP1/NUP62 family. As to quaternary structure, component of the p62 complex, a complex at least composed of NUP62, NUP54, and NUP58. Interacts with NUP88. Interacts with NUTF2. Interacts with HIKESHI. Interacts with OSBPL8. Interacts with CAPG. Interacts with SAS6 and TUBG1 at the centrosome. Interacts with MCM3AP isoform GANP. In terms of assembly, (Microbial infection) Interacts with Epstein-barr virus BGLF4; this interaction allows BGLF4 nuclear entry. In terms of processing, O-glycosylated. Contains about 10 N-acetylglucosamine side chain sites predicted for the entire protein, among which only one in the C-terminal. The inner channel of the NPC has a different redox environment from the cytoplasm and allows the formation of interchain disulfide bonds between some nucleoporins, the significant increase of these linkages upon oxidative stress reduces the permeability of the NPC.

It localises to the nucleus. The protein localises to the nuclear pore complex. The protein resides in the cytoplasm. Its subcellular location is the cytoskeleton. It is found in the spindle pole. It localises to the nucleus envelope. The protein localises to the microtubule organizing center. The protein resides in the centrosome. In terms of biological role, essential component of the nuclear pore complex. The N-terminal is probably involved in nucleocytoplasmic transport. The C-terminal is involved in protein-protein interaction probably via coiled-coil formation, promotes its association with centrosomes and may function in anchorage of p62 to the pore complex. Plays a role in mitotic cell cycle progression by regulating centrosome segregation, centriole maturation and spindle orientation. It might be involved in protein recruitment to the centrosome after nuclear breakdown. The protein is Nuclear pore glycoprotein p62 (NUP62) of Homo sapiens (Human).